A 1020-amino-acid polypeptide reads, in one-letter code: MAMEKTFDAAEAEARITKAWEEAGAFKAGANRSRDESFTIMIPPPNVTGALHVGHAFNNTLQDILTRWHRMRGFDTLWQPGQDHAGIATQMQVEKMLAATQQPSRRELGREEFLKKVWEWKGQYGGTIVEQLKRLGASCDWSRNAFTMAGAAGDPRTGHENSPNFHDAVIKVFVDMYNKGLIYRGKRLVNWDPHFETAISDLEVENIEVAGHMWHFKYPLAGGATYTYVEKDEDGNIVLEEERDYISIATTRPETMLGDGAVAVHPSDERYAPIVGKLCEIPVGPKEHRRQIPIITDEYPDKNFGSGAVKITGAHDFNDYAVAKRGGIPLYRLMDTRGQMRADGAPYAAEAGKAQDYARGRAFTENEIDVINLVPDHLRGLDRFEARAKVVDEITSEGLAVMTVASDPRLGTTALKPGAEGADAIVPLVEAKPIMQPFGDRSKVVIEPMLTDQWFVDAEKVVGPALDAVRDGTVKIIPESGEKTYYHWLENIEPWCISRQLWWGHQIPVWYGPNRDDLGASYKAFCAASEQDALLLAQNYYGANVEVDFDSGPEELSGGIAFGTIEGPGGQKTLQSVSLTRDPDVLDTWFSSGLWPIGTLGWPEDTDEMRRYFPTSVLITGFDILFFWVARMMMMQLAVVDQVPFHTVYLHQLVRDEKGKKMSKTTGNVIDPLEIVDEFGADALRFTNASMAAIGGVLKLSKERITGYRNFTTKLWNAIRFAEMNEVFTDAVPQLSAAELAPKAAVNRWIIGETARVREEVDAALDSYRFNDAANALYAFVWGKVCDWYVELSKPLLQGEDTEAQAETRATMRWVMDQCLVLLHPIMPFITEELWGLTAERAKMLVHADWPTYKAADLVDDAADREMNWVISVIENTRSARAQMRVPAGLYVPMIVTEIDDHGQAAWDRNEALIKRLARIDSLTKADAMPKGCISIAAPGAAFGLPLAEIIDIGAEKDRLEKAKGKLAKELGGLRGRLNNPKFVESAPDEVVEEARENLAAREEEEARLNEALARLAELG.

A 'HIGH' region motif is present at residues 45-55 (PNVTGALHVGH). The short motif at 661 to 665 (KMSKT) is the 'KMSKS' region element. Lysine 664 is a binding site for ATP. Residues 955–1020 (AEKDRLEKAK…EALARLAELG (66 aa)) are a coiled coil.

The protein belongs to the class-I aminoacyl-tRNA synthetase family. ValS type 1 subfamily. As to quaternary structure, monomer.

It is found in the cytoplasm. It catalyses the reaction tRNA(Val) + L-valine + ATP = L-valyl-tRNA(Val) + AMP + diphosphate. Functionally, catalyzes the attachment of valine to tRNA(Val). As ValRS can inadvertently accommodate and process structurally similar amino acids such as threonine, to avoid such errors, it has a 'posttransfer' editing activity that hydrolyzes mischarged Thr-tRNA(Val) in a tRNA-dependent manner. This chain is Valine--tRNA ligase, found in Ruegeria pomeroyi (strain ATCC 700808 / DSM 15171 / DSS-3) (Silicibacter pomeroyi).